The primary structure comprises 628 residues: MPHPDGDLDRRIELLTAQIIAARKAYYQENTSLMSDVEYDALEHELKDAEHAKGFSDRNSPSLTVGIAAQLNLFEPVKHIEPMLSLDNVFSLDQLHSWYEKTKKICPEGDQCTFVCELKIDGVGVSLRYANGYLISAATRGDGAIGEDITQNMLYVPSIPPRIALPGIFEIRGEAFIKRDEFDRINQLSLERSKQFANPRNFVSGCIRTKTPNMRYLESISFYAHGFTQVYGYTSGGMNLHSDITASGGVKTEIEHGMFSAYSRLSECKIPVNSYNRLCTNFSEIESYIENIRLNRQCVPYAIDGIVVKIDSLQKQALLGSTTKAPRWAVAYKFPSESTVTRLLDIEVSVGRTGRVTPYAVLQPIQLDGSEVSRATLHNQKVIGDKDLLIGDYVRIRKAGDIVPEVLCALPEKRDGSEVLFKMPSLCPSCGAELMPSKLGDIDLRCPNMQSCLVQLAGRLEYIGSRGVLDIAYLAEENAYALSHLRKFGKSAEVQLFKITIDDLVALEFMYKGNMRSPFRKKGDSFPGFEEPTKSAQDMVDSIERAKRSPLWKFLLALNIRHIGPASAKALADHFGSIESIINAKIDELLKVRSLGETIAISVHDWFRDPWRVELVNTWRSDGALFGD.

NAD(+) contacts are provided by residues 36–40, 85–86, and glutamate 117; these read DVEYD and SL. Residue lysine 119 is the N6-AMP-lysine intermediate of the active site. 4 residues coordinate NAD(+): arginine 140, glutamate 174, lysine 309, and lysine 333. Zn(2+) contacts are provided by cysteine 427, cysteine 430, cysteine 446, and cysteine 452.

This sequence belongs to the NAD-dependent DNA ligase family. LigA subfamily. Requires Mg(2+) as cofactor. Mn(2+) serves as cofactor.

It carries out the reaction NAD(+) + (deoxyribonucleotide)n-3'-hydroxyl + 5'-phospho-(deoxyribonucleotide)m = (deoxyribonucleotide)n+m + AMP + beta-nicotinamide D-nucleotide.. Its function is as follows. DNA ligase that catalyzes the formation of phosphodiester linkages between 5'-phosphoryl and 3'-hydroxyl groups in double-stranded DNA using NAD as a coenzyme and as the energy source for the reaction. It is essential for DNA replication and repair of damaged DNA. The sequence is that of DNA ligase from Tropheryma whipplei (strain TW08/27) (Whipple's bacillus).